A 171-amino-acid polypeptide reads, in one-letter code: Iron-sulfur cluster assembly protein 3 (171 aa).

The N-terminal 49 residues, 1-49 (MLRQTTKRAFLGLASQNPTPFPVVSRLYHPNVIDHYDNPRNVGSFDKND), are a transit peptide targeting the mitochondrion.

The protein belongs to the NifU family. As to quaternary structure, component of the core Fe-S cluster (ISC) assembly machinery. Requires [2Fe-2S] cluster as cofactor. In terms of tissue distribution, mostly expressed in flowers and pollen, and, to a lower extent, in leaves and roots.

Its subcellular location is the mitochondrion matrix. Its pathway is cofactor biosynthesis; iron-sulfur cluster biosynthesis. In terms of biological role, scaffold protein for the de novo synthesis of iron-sulfur (Fe-S) clusters within mitochondria, which is required for maturation of both mitochondrial and cytoplasmic [2Fe-2S] and [4Fe-4S] proteins. First, a [2Fe-2S] cluster is transiently assembled on the scaffold protein ISCU (ISU1, ISU2 or ISU3). In a second step, the cluster is released from ISCU, transferred to a glutaredoxin, followed by the formation of mitochondrial [2Fe-2S] proteins, the synthesis of [4Fe-4S] clusters and their target-specific insertion into the recipient apoproteins. Cluster assembly on ISCU depends on the function of the cysteine desulfurase complex NFS1-ISD11, which serves as the sulfur donor for cluster synthesis, the iron-binding protein frataxin as the putative iron donor, and the electron transfer chain comprised of ferredoxin reductase and ferredoxin, which receive their electrons from NADH. This is Iron-sulfur cluster assembly protein 3 (ISU3) from Arabidopsis thaliana (Mouse-ear cress).